The following is a 574-amino-acid chain: Adenine deaminase (574 aa).

This sequence belongs to the metallo-dependent hydrolases superfamily. Adenine deaminase family. Requires Mn(2+) as cofactor.

It catalyses the reaction adenine + H2O + H(+) = hypoxanthine + NH4(+). This Thermosipho melanesiensis (strain DSM 12029 / CIP 104789 / BI429) protein is Adenine deaminase.